The sequence spans 142 residues: Large ribosomal subunit protein uL11 (142 aa).

This sequence belongs to the universal ribosomal protein uL11 family. In terms of assembly, part of the ribosomal stalk of the 50S ribosomal subunit. Interacts with L10 and the large rRNA to form the base of the stalk. L10 forms an elongated spine to which L12 dimers bind in a sequential fashion forming a multimeric L10(L12)X complex. Post-translationally, one or more lysine residues are methylated.

In terms of biological role, forms part of the ribosomal stalk which helps the ribosome interact with GTP-bound translation factors. This Mycolicibacterium gilvum (strain PYR-GCK) (Mycobacterium gilvum (strain PYR-GCK)) protein is Large ribosomal subunit protein uL11.